The chain runs to 352 residues: Protein RecA (352 aa).

67-74 (GPESSGKT) provides a ligand contact to ATP. Residues 333–352 (DSTPDFAVDGNDAEETEQDF) form a disordered region. The segment covering 343–352 (NDAEETEQDF) has biased composition (acidic residues).

Belongs to the RecA family.

The protein resides in the cytoplasm. Can catalyze the hydrolysis of ATP in the presence of single-stranded DNA, the ATP-dependent uptake of single-stranded DNA by duplex DNA, and the ATP-dependent hybridization of homologous single-stranded DNAs. It interacts with LexA causing its activation and leading to its autocatalytic cleavage. The polypeptide is Protein RecA (Klebsiella pneumoniae (strain 342)).